We begin with the raw amino-acid sequence, 359 residues long: 3-dehydroquinate synthase (359 aa).

NAD(+) is bound by residues 69 to 74 (DAEDGK), 103 to 107 (GAVTD), 127 to 128 (TT), lysine 140, and lysine 149. The Zn(2+) site is built by glutamate 182, histidine 244, and histidine 260.

The protein belongs to the sugar phosphate cyclases superfamily. Dehydroquinate synthase family. NAD(+) serves as cofactor. Co(2+) is required as a cofactor. It depends on Zn(2+) as a cofactor.

The protein localises to the cytoplasm. The enzyme catalyses 7-phospho-2-dehydro-3-deoxy-D-arabino-heptonate = 3-dehydroquinate + phosphate. Its pathway is metabolic intermediate biosynthesis; chorismate biosynthesis; chorismate from D-erythrose 4-phosphate and phosphoenolpyruvate: step 2/7. In terms of biological role, catalyzes the conversion of 3-deoxy-D-arabino-heptulosonate 7-phosphate (DAHP) to dehydroquinate (DHQ). The polypeptide is 3-dehydroquinate synthase (Corynebacterium pseudotuberculosis (strain C231)).